Reading from the N-terminus, the 75-residue chain is MARSDMIEVDGVIVEPRSNGFFTVRLDLENQPEVIAHLGGKLRRHYIRVVPGDRVTVELSPYDLTRGRIVYRYRH.

The S1-like domain maps to 1–74; the sequence is MARSDMIEVD…TRGRIVYRYR (74 aa).

Belongs to the IF-1 family. In terms of assembly, component of the 30S ribosomal translation pre-initiation complex which assembles on the 30S ribosome in the order IF-2 and IF-3, IF-1 and N-formylmethionyl-tRNA(fMet); mRNA recruitment can occur at any time during PIC assembly.

It is found in the cytoplasm. Functionally, one of the essential components for the initiation of protein synthesis. Stabilizes the binding of IF-2 and IF-3 on the 30S subunit to which N-formylmethionyl-tRNA(fMet) subsequently binds. Helps modulate mRNA selection, yielding the 30S pre-initiation complex (PIC). Upon addition of the 50S ribosomal subunit IF-1, IF-2 and IF-3 are released leaving the mature 70S translation initiation complex. This is Translation initiation factor IF-1 1 from Symbiobacterium thermophilum (strain DSM 24528 / JCM 14929 / IAM 14863 / T).